We begin with the raw amino-acid sequence, 46 residues long: Mu-segestritoxin-Sf1h (46 aa).

Intrachain disulfides connect C3-C19, C10-C22, C18-C42, and C24-C40. Residues R31–W33 form a keys region for toxin activity region.

The protein belongs to the neurotoxin 16 (SFI) family. Expressed by the venom gland.

The protein resides in the secreted. Its function is as follows. Insecticidal toxin. It inhibits insect voltage-gated sodium channels (Nav) by partially blocking the channel pore in DUM neurons from the American cockroach, not by acting as a gating modifier. The inhibition is only partially reversible after prolonged washout. In vivo, the toxin causes flaccid paralysis followed by death when injected into Heliothis virescens larvae. It also causes uncoordinated movements followed by full paralysis to sheep blowflies (Lucilia cuprina). When the toxin is fused to snowdrop lectin, it is orally active against larvae of the tomato moth (Laconobia oleracea), the rice brown planthopper (Nilaparvata lugens), and the peach-potato aphid (Myzus persicae). The protein is Mu-segestritoxin-Sf1h of Segestria florentina (Tube-web spider).